The chain runs to 181 residues: MMLQHPGQVSASEVSATAIVPCLSPPGSLVFEDFANLTPFVKEELRFAIQNKHLCHRMSSALESVTINNRPLEMSVTKSEVAPEEDERKRRRRERNKIAAAKCRNKKKEKTECLQKESEKLESVNAELKAQIEELKNEKQHLIYMLNLHRPTCIVRAQNGRTPEDERNLFIQQIKEGTLQS.

The disordered stretch occupies residues 76–96 (VTKSEVAPEEDERKRRRRERN). A Glycyl lysine isopeptide (Lys-Gly) (interchain with G-Cter in SUMO2) cross-link involves residue K78. Positions 86 to 149 (DERKRRRRER…QHLIYMLNLH (64 aa)) constitute a bZIP domain. The segment at 88–110 (RKRRRRERNKIAAAKCRNKKKEK) is basic motif. Positions 114-142 (LQKESEKLESVNAELKAQIEELKNEKQHL) are leucine-zipper. T162 is subject to Phosphothreonine. K175 participates in a covalent cross-link: Glycyl lysine isopeptide (Lys-Gly) (interchain with G-Cter in SUMO2).

This sequence belongs to the bZIP family. ATF subfamily. In terms of assembly, ATF3 alone can bind DNA, but it preferentially forms heteromeric complexes with JUN and JUNB and does not interact with FOS. Expressed in tissues containing skeletal muscle or smooth muscle. Expressed in cutaneous and muscular sensory neurons.

The protein resides in the nucleus. This protein binds the cAMP response element (CRE) (consensus: 5'-GTGACGT[AC][AG]-3'), a sequence present in many viral and cellular promoters. Represses transcription from promoters with ATF sites. It may repress transcription by stabilizing the binding of inhibitory cofactors at the promoter. This is Cyclic AMP-dependent transcription factor ATF-3 (Atf3) from Rattus norvegicus (Rat).